We begin with the raw amino-acid sequence, 78 residues long: MKLTCVMIVAVLFLTAWTFATADDPRNGLGNLFSNAHHEMKNPEASKLNKRWCKQSGEMCNLLDQNCCEGYCIVLVCT.

The signal sequence occupies residues 1 to 22 (MKLTCVMIVAVLFLTAWTFATA). The propeptide occupies 23-49 (DDPRNGLGNLFSNAHHEMKNPEASKLN). 3 disulfide bridges follow: C53–C68, C60–C72, and C67–C77.

It belongs to the conotoxin O1 superfamily. As to expression, expressed by the venom duct.

The protein localises to the secreted. Functionally, delta-conotoxins bind to site 6 of voltage-gated sodium channels (Nav) and inhibit the inactivation process. The sequence is that of Delta-conotoxin-like Ai6.1 from Conus ammiralis (Admiral cone).